A 344-amino-acid polypeptide reads, in one-letter code: Probable Delta(7)-sterol 5(6)-desaturase (344 aa).

3 helical membrane-spanning segments follow: residues Leu-76–Leu-96, Gln-123–Val-143, and Trp-160–Ile-180. The region spanning Pro-167–Gly-292 is the Fatty acid hydroxylase domain. Residues His-181 to His-185 carry the Histidine box-1 motif. The short motif at His-194 to His-198 is the Histidine box-2 element. A helical membrane pass occupies residues His-224–Ile-244. Positions His-269–His-273 match the Histidine box-3 motif.

Belongs to the sterol desaturase family. The cofactor is Fe cation.

The protein localises to the endoplasmic reticulum membrane. The catalysed reaction is a Delta(7)-sterol + 2 Fe(II)-[cytochrome b5] + O2 + 2 H(+) = a Delta(5),Delta(7)-sterol + 2 Fe(III)-[cytochrome b5] + 2 H2O. It functions in the pathway steroid metabolism; ergosterol biosynthesis; ergosterol from zymosterol: step 3/5. In terms of biological role, catalyzes the introduction of a C-5 double bond in the B ring of ergosterol. May contribute to the regulation of ergosterol biosynthesis. The sequence is that of Probable Delta(7)-sterol 5(6)-desaturase from Neurospora crassa (strain ATCC 24698 / 74-OR23-1A / CBS 708.71 / DSM 1257 / FGSC 987).